The chain runs to 219 residues: Leucyl/phenylalanyl-tRNA--protein transferase (219 aa).

This sequence belongs to the L/F-transferase family.

It is found in the cytoplasm. The enzyme catalyses N-terminal L-lysyl-[protein] + L-leucyl-tRNA(Leu) = N-terminal L-leucyl-L-lysyl-[protein] + tRNA(Leu) + H(+). It catalyses the reaction N-terminal L-arginyl-[protein] + L-leucyl-tRNA(Leu) = N-terminal L-leucyl-L-arginyl-[protein] + tRNA(Leu) + H(+). It carries out the reaction L-phenylalanyl-tRNA(Phe) + an N-terminal L-alpha-aminoacyl-[protein] = an N-terminal L-phenylalanyl-L-alpha-aminoacyl-[protein] + tRNA(Phe). Functionally, functions in the N-end rule pathway of protein degradation where it conjugates Leu, Phe and, less efficiently, Met from aminoacyl-tRNAs to the N-termini of proteins containing an N-terminal arginine or lysine. The protein is Leucyl/phenylalanyl-tRNA--protein transferase of Leptospira borgpetersenii serovar Hardjo-bovis (strain JB197).